A 1147-amino-acid chain; its full sequence is SR-related and CTD-associated factor 4 (1147 aa).

The CID domain maps to 1 to 139 (MDAVNAFNQE…PLLDMAAGTS (139 aa)). N6-acetyllysine is present on K49. Disordered stretches follow at residues 145-179 (AENV…AVPQ), 235-254 (KTTP…PEQK), 269-331 (DEPE…QQPA), and 424-502 (VKRH…KPET). Residue S154 is modified to Phosphoserine. 2 stretches are compositionally biased toward low complexity: residues 283 to 292 (TAVTTTAPAA) and 299 to 310 (TATVPAAAAPAA). Over residues 424 to 433 (VKRHMSDNRK) the composition is skewed to basic and acidic residues. Over residues 434 to 475 (SRSRSASRSPKRRRSRSGSRSRRSRHRRSRSRSRDRRRHSPR) the composition is skewed to basic residues. Basic and acidic residues predominate over residues 477-492 (RSQERRDREKERERRQ). One can recognise an RRM domain in the interval 508–582 (TTLWVGQLDK…KSIKIAWALN (75 aa)). 2 disordered regions span residues 629 to 661 (DWKG…IPKP) and 879 to 1147 (RPMP…EAPR). Residue S656 is modified to Phosphoserine. Pro residues predominate over residues 879–913 (RPMPPHMMHRGPPPGPGGFAMPPPHGMKGPFPPHG). The segment covering 941–965 (QQPPQQPQQQPQPQAPQQPQQQQQQ) has biased composition (low complexity). Over residues 966-977 (QPPPSQQPPPTQ) the composition is skewed to pro residues. S1004 carries the phosphoserine modification. Residues 1009-1085 (VENDRERYGN…RGKEKPEVTD (77 aa)) show a composition bias toward basic and acidic residues.

Interacts with POLR2A; via C-terminal heptapeptide repeat domain (CTD) phosphorylated at 'Ser-2' and 'Ser-5'.

The protein localises to the nucleus. Anti-terminator protein required to prevent early mRNA termination during transcription. Together with SCAF8, acts by suppressing the use of early, alternative poly(A) sites, thereby preventing the accumulation of non-functional truncated proteins. Mechanistically, associates with the phosphorylated C-terminal heptapeptide repeat domain (CTD) of the largest RNA polymerase II subunit (POLR2A), and subsequently binds nascent RNA upstream of early polyadenylation sites to prevent premature mRNA transcript cleavage and polyadenylation. Independently of SCAF8, also acts as a suppressor of transcriptional readthrough. The sequence is that of SR-related and CTD-associated factor 4 from Homo sapiens (Human).